The following is a 573-amino-acid chain: Probable pectinesterase/pectinesterase inhibitor 41 (573 aa).

Positions 1-22 (MLSLKLFLVTLFLSLQTLFIAS) are cleaved as a signal peptide. Residues 25-184 (LLPSNSSSTI…TKLFSVSLAL (160 aa)) form a pectinesterase inhibitor 41 region. N-linked (GlcNAc...) asparagine glycosylation is found at Asn-29, Asn-119, Asn-173, Asn-264, Asn-268, Asn-281, and Asn-320. The tract at residues 259–557 (VTVNQNGTGN…FTVENFLLGD (299 aa)) is pectinesterase 41. Thr-336 provides a ligand contact to substrate. A glycan (N-linked (GlcNAc...) asparagine) is linked at Asn-353. A substrate-binding site is contributed by Gln-366. Residue Asp-389 is the Proton donor; for pectinesterase activity of the active site. Cys-403 and Cys-423 are disulfide-bonded. Asp-410 acts as the Nucleophile; for pectinesterase activity in catalysis. Residues Asn-456 and Asn-469 are each glycosylated (N-linked (GlcNAc...) asparagine). Residues Arg-478 and Trp-480 each coordinate substrate. 3 N-linked (GlcNAc...) asparagine glycosylation sites follow: Asn-520, Asn-541, and Asn-547.

The protein in the N-terminal section; belongs to the PMEI family. It in the C-terminal section; belongs to the pectinesterase family. As to expression, expressed in flowers, siliques, floral stems and rosettes leaves.

It is found in the secreted. The protein localises to the cell wall. The enzyme catalyses [(1-&gt;4)-alpha-D-galacturonosyl methyl ester](n) + n H2O = [(1-&gt;4)-alpha-D-galacturonosyl](n) + n methanol + n H(+). The protein operates within glycan metabolism; pectin degradation; 2-dehydro-3-deoxy-D-gluconate from pectin: step 1/5. Functionally, acts in the modification of cell walls via demethylesterification of cell wall pectin. This is Probable pectinesterase/pectinesterase inhibitor 41 (PME41) from Arabidopsis thaliana (Mouse-ear cress).